Consider the following 583-residue polypeptide: CBP80/20-dependent translation initiation factor (583 aa).

Disordered regions lie at residues 42-95 (TDKT…PLDM), 129-154 (RQRN…RVEG), 190-251 (RKRN…GYSQ), and 294-325 (SNTD…RPKI). Residues 43-53 (DKTEGDGESDK) show a composition bias toward basic and acidic residues. Residues 54–63 (TQSNVSQWTV) show a composition bias toward polar residues. Basic and acidic residues-rich tracts occupy residues 65–80 (CTER…RNRE) and 141–154 (IDRD…RVEG). Over residues 190–199 (RKRNDRRKQQ) the composition is skewed to basic residues. The segment covering 200-213 (KPQGGNKQPPSQQN) has biased composition (low complexity). Residues 298–324 (STERHCPPANDSEAKRKESIQSRDRPK) show a composition bias toward basic and acidic residues. The 202-residue stretch at 361-562 (IEILNSMRNN…LEVIELHANS (202 aa)) folds into the MIF4G domain.

Belongs to the CTIF family.

The protein localises to the cytoplasm. Its subcellular location is the perinuclear region. Functionally, specifically required for the pioneer round of mRNA translation mediated by the cap-binding complex (CBC), that takes place during or right after mRNA export via the nuclear pore complex (NPC). In contrast, it is not involved in steady state translation, that takes place when the CBC complex is replaced by cytoplasmic cap-binding protein eIF4E. Also required for nonsense-mediated mRNA decay (NMD), the pioneer round of mRNA translation mediated by the cap-binding complex playing a central role in nonsense-mediated mRNA decay (NMD). This Xenopus tropicalis (Western clawed frog) protein is CBP80/20-dependent translation initiation factor (ctif).